Consider the following 337-residue polypeptide: Ribosomal RNA small subunit methyltransferase C (337 aa).

It belongs to the methyltransferase superfamily. RsmC family. In terms of assembly, monomer.

It is found in the cytoplasm. The catalysed reaction is guanosine(1207) in 16S rRNA + S-adenosyl-L-methionine = N(2)-methylguanosine(1207) in 16S rRNA + S-adenosyl-L-homocysteine + H(+). In terms of biological role, specifically methylates the guanine in position 1207 of 16S rRNA in the 30S particle. This is Ribosomal RNA small subunit methyltransferase C from Acinetobacter baumannii (strain ACICU).